Here is a 150-residue protein sequence, read N- to C-terminus: MKVSAAARGRARHFAMQALYQWEMSGNALHVIEAEFHTDNDMSKVDVEYFHEILHGVAAIKSTLDETFKPFLTGLRLDEIDPVSLAVLRQACYEFEKRVDVPYKVVINEAVNLAKKFGAADSHKFINGVLDKVALRVRKDEVEAMRTGRS.

This sequence belongs to the NusB family.

Its function is as follows. Involved in transcription antitermination. Required for transcription of ribosomal RNA (rRNA) genes. Binds specifically to the boxA antiterminator sequence of the ribosomal RNA (rrn) operons. The protein is Transcription antitermination protein NusB of Saccharophagus degradans (strain 2-40 / ATCC 43961 / DSM 17024).